The sequence spans 83 residues: Exodeoxyribonuclease 7 small subunit (83 aa).

This sequence belongs to the XseB family. Heterooligomer composed of large and small subunits.

Its subcellular location is the cytoplasm. The enzyme catalyses Exonucleolytic cleavage in either 5'- to 3'- or 3'- to 5'-direction to yield nucleoside 5'-phosphates.. Functionally, bidirectionally degrades single-stranded DNA into large acid-insoluble oligonucleotides, which are then degraded further into small acid-soluble oligonucleotides. In Mesorhizobium japonicum (strain LMG 29417 / CECT 9101 / MAFF 303099) (Mesorhizobium loti (strain MAFF 303099)), this protein is Exodeoxyribonuclease 7 small subunit.